Consider the following 122-residue polypeptide: Large ribosomal subunit protein uL14 (122 aa).

The protein belongs to the universal ribosomal protein uL14 family. In terms of assembly, part of the 50S ribosomal subunit. Forms a cluster with proteins L3 and L19. In the 70S ribosome, L14 and L19 interact and together make contacts with the 16S rRNA in bridges B5 and B8.

Its function is as follows. Binds to 23S rRNA. Forms part of two intersubunit bridges in the 70S ribosome. The protein is Large ribosomal subunit protein uL14 of Acinetobacter baumannii (strain SDF).